The primary structure comprises 279 residues: Energy-coupling factor transporter ATP-binding protein EcfA (279 aa).

In terms of domain architecture, ABC transporter spans 5–240; the sequence is IELEKINYKY…GPELIDLGLD (236 aa). Residue 40–47 participates in ATP binding; sequence GHNGSGKS.

It belongs to the ABC transporter superfamily. Energy-coupling factor EcfA family. In terms of assembly, forms a stable energy-coupling factor (ECF) transporter complex composed of 2 membrane-embedded substrate-binding proteins (S component), 2 ATP-binding proteins (A component) and 2 transmembrane proteins (T component).

It localises to the cell membrane. Functionally, ATP-binding (A) component of a common energy-coupling factor (ECF) ABC-transporter complex. Unlike classic ABC transporters this ECF transporter provides the energy necessary to transport a number of different substrates. The protein is Energy-coupling factor transporter ATP-binding protein EcfA of Enterococcus faecium (Streptococcus faecium).